Here is a 133-residue protein sequence, read N- to C-terminus: Large ribosomal subunit protein uL15 (133 aa).

The disordered stretch occupies residues 1–58; it reads MALQNLTPAPGSTHATKRLGRGQGSGNGKTAGKGNKGQRARKGYNEKRGFEGGQQPLQ. Residues 21 to 35 show a composition bias toward gly residues; sequence RGQGSGNGKTAGKGN.

This sequence belongs to the universal ribosomal protein uL15 family. Part of the 50S ribosomal subunit.

Functionally, binds to the 23S rRNA. This is Large ribosomal subunit protein uL15 from Campylobacter curvus (strain 525.92).